The primary structure comprises 113 residues: uncharacterized protein (113 aa).

Residues 28 to 55 (CDGGPRRPLSRRGEEARRARAPSYEEQE) form a disordered region.

This is an uncharacterized protein from Human cytomegalovirus (strain AD169) (HHV-5).